Reading from the N-terminus, the 822-residue chain is Collagen alpha chain CG42342 (822 aa).

Disordered regions lie at residues 1-45 (MRKH…VEAP) and 66-99 (RLAPPPCQHPINNSNNNSNISNNSSNSSSSKERP). Residues 1–104 (MRKHKAPPSG…SKERPRPTVR (104 aa)) lie on the Cytoplasmic side of the membrane. A compositionally biased stretch (polar residues) spans 11–25 (SPRTMAQDNSQSEPS). Over residues 76-94 (INNSNNNSNISNNSSNSSS) the composition is skewed to low complexity. The chain crosses the membrane as a helical; Signal-anchor for type II membrane protein span at residues 105–125 (FISLLHVASYVLCLCAFSFAL). Over 126–822 (YGNVRQTRLE…EYQDNLHNNE (697 aa)) the chain is Extracellular. A coiled-coil region spans residues 131–162 (QTRLEQRMQRLQQLDARIVELELRLEQQQLLH). Disordered regions lie at residues 169 to 188 (QVLASHPSDRDSSNSNNGSQ), 205 to 297 (VSHL…GHPG), and 345 to 822 (LKGE…HNNE). Residues 194-222 (VRRELHRLRRDVSHLQLTRRQQRRQAAEA) are a coiled coil. 7 Collagen-like domains span residues 241–299 (QPGP…PGMD), 350–409 (GEPG…KGDR), 430–469 (GPPGPAGPPGPPGEPGARGEPGPIGPAGPPGEKGPRGKRG), 493–526 (RGPPGPPGIAGKDGRDGRDGSKGEPGEPGEPGSL), 527–586 (GPRG…KGDK), 621–680 (GPPG…SGKA), and 681–740 (GIPG…KGEQ). Pro residues predominate over residues 242-251 (PGPPGPPGPP). Over residues 284 to 293 (PGDKGQKGDV) the composition is skewed to basic and acidic residues. Positions 360–402 (EAGQPGAPGERGPPGEIGAQGPQGEAGQPGVAGPPGVAGAPGT) are enriched in low complexity. Positions 403–412 (KGDKGDRGDR) are enriched in basic and acidic residues. A compositionally biased stretch (pro residues) spans 431–443 (PPGPAGPPGPPGE). The segment covering 504 to 517 (KDGRDGRDGSKGEP) has biased composition (basic and acidic residues). Residues 522–540 (EPGSLGPRGLDGLPGEPGI) are compositionally biased toward low complexity. A compositionally biased stretch (pro residues) spans 567-579 (LMGPPGLPGPPGY). A compositionally biased stretch (basic and acidic residues) spans 583 to 602 (KGDKGDRGDSYRKMRRRQDD). Pro residues predominate over residues 619 to 628 (PPGPPGPMGP). Positions 638 to 655 (RGLDGRKGDPGEKGHKGD) are enriched in basic and acidic residues. Positions 658 to 668 (PMGLPGPMGMR) are enriched in low complexity. Positions 790–822 (TSDYEQEEEEDDEQAEDNENEYDEYQDNLHNNE) form a coiled coil. Residues 793–815 (YEQEEEEDDEQAEDNENEYDEYQ) show a composition bias toward acidic residues.

It localises to the cell membrane. This Drosophila melanogaster (Fruit fly) protein is Collagen alpha chain CG42342.